The following is a 384-amino-acid chain: Cysteine protease ATG4B (384 aa).

The active-site Nucleophile is the C74. Active-site residues include D269 and H271. Residues 379-382 carry the LIR motif; sequence FEIL.

Belongs to the peptidase C54 family.

The protein resides in the cytoplasm. It is found in the cytosol. It localises to the cytoplasmic vesicle. The protein localises to the autophagosome. Its subcellular location is the endoplasmic reticulum. The protein resides in the mitochondrion. It catalyses the reaction [protein]-C-terminal L-amino acid-glycyl-phosphatidylethanolamide + H2O = [protein]-C-terminal L-amino acid-glycine + a 1,2-diacyl-sn-glycero-3-phosphoethanolamine. It carries out the reaction [protein]-C-terminal L-amino acid-glycyl-phosphatidylserine + H2O = [protein]-C-terminal L-amino acid-glycine + a 1,2-diacyl-sn-glycero-3-phospho-L-serine. Functionally, cysteine protease that plays a key role in autophagy by mediating both proteolytic activation and delipidation of ATG8 family proteins. Required for canonical autophagy (macroautophagy), non-canonical autophagy as well as for mitophagy. The protease activity is required for proteolytic activation of ATG8 family proteins: cleaves the C-terminal amino acid of ATG8 proteins to reveal a C-terminal glycine. Exposure of the glycine at the C-terminus is essential for ATG8 proteins conjugation to phosphatidylethanolamine (PE) and insertion to membranes, which is necessary for autophagy. Protease activity is also required to counteract formation of high-molecular weight conjugates of ATG8 proteins (ATG8ylation): acts as a deubiquitinating-like enzyme that removes ATG8 conjugated to other proteins, such as ATG3. In addition to the protease activity, also mediates delipidation of ATG8 family proteins. Catalyzes delipidation of PE-conjugated forms of ATG8 proteins during macroautophagy. Also involved in non-canonical autophagy, a parallel pathway involving conjugation of ATG8 proteins to single membranes at endolysosomal compartments, by catalyzing delipidation of ATG8 proteins conjugated to phosphatidylserine (PS). The chain is Cysteine protease ATG4B from Xenopus laevis (African clawed frog).